Reading from the N-terminus, the 382-residue chain is 3-phytase (382 aa).

A signal peptide spans methionine 1–alanine 26. Positions histidine 27–leucine 361 constitute a BPP domain.

The protein resides in the secreted. It carries out the reaction 1D-myo-inositol hexakisphosphate + H2O = 1D-myo-inositol 1,2,4,5,6-pentakisphosphate + phosphate. This chain is 3-phytase (phy), found in Bacillus subtilis (strain 168).